We begin with the raw amino-acid sequence, 440 residues long: Trigger factor (440 aa).

The PPIase FKBP-type domain occupies 160 to 253 (KDTVIGDALR…VTEVKRLELP (94 aa)).

This sequence belongs to the FKBP-type PPIase family. Tig subfamily.

The protein resides in the cytoplasm. The enzyme catalyses [protein]-peptidylproline (omega=180) = [protein]-peptidylproline (omega=0). Its function is as follows. Involved in protein export. Acts as a chaperone by maintaining the newly synthesized protein in an open conformation. Functions as a peptidyl-prolyl cis-trans isomerase. In Chlorobium chlorochromatii (strain CaD3), this protein is Trigger factor.